A 143-amino-acid polypeptide reads, in one-letter code: Large ribosomal subunit protein uL11 (143 aa).

The protein belongs to the universal ribosomal protein uL11 family. Part of the ribosomal stalk of the 50S ribosomal subunit. Interacts with L10 and the large rRNA to form the base of the stalk. L10 forms an elongated spine to which L12 dimers bind in a sequential fashion forming a multimeric L10(L12)X complex. One or more lysine residues are methylated.

Its function is as follows. Forms part of the ribosomal stalk which helps the ribosome interact with GTP-bound translation factors. The polypeptide is Large ribosomal subunit protein uL11 (Burkholderia mallei (strain NCTC 10247)).